A 195-amino-acid polypeptide reads, in one-letter code: Obelin (195 aa).

A propeptide spanning residues 1–6 (MASKYA) is cleaved from the precursor. EF-hand domains lie at 17 to 52 (KWIKRHKFMFDYLDINGNGQITLDEIVSKASDDICK), 53 to 88 (NLGATPAQTQRHQDCVEAFFRGCGLEYGKETKFPEF), 110 to 145 (LIREWGDAVFDIFDKDGSGTITLDEWKAYGRISGIS), and 146 to 181 (PSEEDCEKTFQHCDLDNSGELDVDEMTRQHLGFWYT). Ca(2+) is bound by residues D30, N32, N34, Q36, and E41. The Ca(2+) site is built by D123, D125, S127, T129, E134, D159, D161, S163, E165, and E170.

This sequence belongs to the aequorin family.

In terms of biological role, ca(2+)-dependent bioluminescence photoprotein. Displays an emission peak at 495 nm (blue light). Trace amounts of calcium ion trigger the intramolecular oxidation of the chromophore, coelenterazine into coelenteramide and CO(2) with the concomitant emission of light. The chain is Obelin from Obelia geniculata (Knotted thread hydroid).